A 103-amino-acid chain; its full sequence is Large ribosomal subunit protein uL24 (103 aa).

The protein belongs to the universal ribosomal protein uL24 family. As to quaternary structure, part of the 50S ribosomal subunit.

In terms of biological role, one of two assembly initiator proteins, it binds directly to the 5'-end of the 23S rRNA, where it nucleates assembly of the 50S subunit. Its function is as follows. One of the proteins that surrounds the polypeptide exit tunnel on the outside of the subunit. The protein is Large ribosomal subunit protein uL24 of Actinobacillus pleuropneumoniae serotype 3 (strain JL03).